We begin with the raw amino-acid sequence, 397 residues long: LIM/homeobox protein Lhx9 (397 aa).

LIM zinc-binding domains lie at 69–130 and 131–193; these read ALCA…RFSV and QRCA…LLQG. 3 disordered regions span residues 248 to 272, 330 to 364, and 378 to 397; these read ENEA…RMRT, ENGG…TLTD, and SNMD…TNLF. The homeobox DNA-binding region spans 267-326; sequence TKRMRTSFKHHQLRTMKSYFAINHNPDAKDLKQLAQKTGLTKRVLQVWFQNARAKFRRNL. Residues 353–364 are compositionally biased toward low complexity; that stretch reads LTPPGTATTLTD.

As to quaternary structure, interacts with LDB1 and LDB2.

The protein resides in the nucleus. Functionally, involved in gonadal development. This Homo sapiens (Human) protein is LIM/homeobox protein Lhx9 (LHX9).